Consider the following 796-residue polypeptide: Histone-lysine N-methyltransferase PRDM9 (796 aa).

Residues 1-23 (MSRTMNTNKPEENSTEGDAGKLE) are disordered. In terms of domain architecture, KRAB-related spans 27-90 (KVKDEFKDIS…QRQAIKPQIN (64 aa)). A disordered region spans residues 149–172 (SEHAQKPVCSPEEGNTSGQHFGKK). Residues cysteine 209, cysteine 212, cysteine 220, and histidine 223 each coordinate Zn(2+). The SET domain occupies 248–362 (PGLRIGPSGI…PGRELLVWYG (115 aa)). S-adenosyl-L-methionine contacts are provided by residues 260–262 (AGL), tyrosine 295, and 324–325 (NC). 292-298 (NSGYSWL) provides a ligand contact to substrate. Tyrosine 361 lines the substrate pocket. Lysine 372 carries the N6,N6,N6-trimethyllysine; alternate modification. The residue at position 372 (lysine 372) is an N6-methyllysine; alternate. Residues lysine 376 and lysine 378 each carry the N6-methyllysine modification. Residues 392-415 (HPCFLCSLAFSSQKFLTQHVEWNH) form a C2H2-type 1 zinc finger. The Zn(2+) site is built by cysteine 394, cysteine 397, histidine 410, and histidine 415. The segment covering 443–457 (FDSQNKNDKASNEVK) has biased composition (basic and acidic residues). The tract at residues 443 to 497 (FDSQNKNDKASNEVKRKSKPRHKWTRQRISTAFSSTLKEQMRSEESKRTVEEELR) is disordered. Residues 458–468 (RKSKPRHKWTR) are compositionally biased toward basic residues. A compositionally biased stretch (polar residues) spans 469–480 (QRISTAFSSTLK). The span at 481 to 497 (EQMRSEESKRTVEEELR) shows a compositional bias: basic and acidic residues. The segment at 522-540 (QCGQCFSDKSNVSEHQRTH) adopts a C2H2-type 2; degenerate zinc-finger fold. C2H2-type zinc fingers lie at residues 546–568 (YICR…QRTH), 574–596 (YICR…QRTH), 602–624 (YICR…QRTH), 630–652 (YICR…QRTH), 658–680 (YICR…QRTH), 686–708 (YICR…LRTH), 714–736 (YICR…QRTH), 742–764 (YICR…QRTH), and 770–792 (YICR…QRTH). Residues cysteine 716, cysteine 719, histidine 732, histidine 736, cysteine 744, cysteine 747, histidine 760, histidine 764, cysteine 772, cysteine 775, histidine 788, and histidine 792 each coordinate Zn(2+).

Belongs to the class V-like SAM-binding methyltransferase superfamily. Homodimer. Interacts with EHMT2 and CDYL; interaction only takes place when PRDM9 is bound to hotspot DNA. Interacts with CXXC1; this interaction does not link PRDM9-activated recombination hotspot sites with DSB machinery and is not required for the hotspot recognition pathway. Forms a complex with EWSR1, REC8, SYCP3 and SYCP1; complex formation is dependent of phosphorylated form of REC8 and requires PRDM9 bound to hotspot DNA; EWSR1 joins PRDM9 with the chromosomal axis through REC8. In terms of processing, mono-methylated; automethylated. Tri-methylated; automethylated. Mono-methylation is predominant; automethylation is lower and slower than H3 peptide methylation and is in a highest S-adenosyl-L-methionine concentration-dependent. There are two major sites for automethylation at Lys-372 and Lys-378. Lysines can be simultaneously methylated, such as Lys-372(me3)/Lys-376(me1), Lys-372(me1)/Lys-378(me1) and Lys-372(me1)/Lys-376(me1)/Lys-378(me1). Automethylation is an intramolecular (cis) process.

It is found in the nucleus. It localises to the chromosome. The enzyme catalyses L-lysyl-[protein] + S-adenosyl-L-methionine = N(6)-methyl-L-lysyl-[protein] + S-adenosyl-L-homocysteine + H(+). It carries out the reaction N(6)-methyl-L-lysyl-[protein] + S-adenosyl-L-methionine = N(6),N(6)-dimethyl-L-lysyl-[protein] + S-adenosyl-L-homocysteine + H(+). It catalyses the reaction L-lysyl(4)-[histone H3] + 3 S-adenosyl-L-methionine = N(6),N(6),N(6)-trimethyl-L-lysyl(4)-[histone H3] + 3 S-adenosyl-L-homocysteine + 3 H(+). The catalysed reaction is L-lysyl(36)-[histone H3] + 3 S-adenosyl-L-methionine = N(6),N(6),N(6)-trimethyl-L-lysyl(36)-[histone H3] + 3 S-adenosyl-L-homocysteine + 3 H(+). The enzyme catalyses L-lysyl(9)-[histone H3] + 3 S-adenosyl-L-methionine = N(6),N(6),N(6)-trimethyl-L-lysyl(9)-[histone H3] + 3 S-adenosyl-L-homocysteine + 3 H(+). It carries out the reaction L-lysyl(20)-[histone H4] + S-adenosyl-L-methionine = N(6)-methyl-L-lysyl(20)-[histone H4] + S-adenosyl-L-homocysteine + H(+). It catalyses the reaction N(6)-methyl-L-lysyl(20)-[histone H4] + S-adenosyl-L-methionine = N(6),N(6)-dimethyl-L-lysyl(20)-[histone H4] + S-adenosyl-L-homocysteine + H(+). Histone methyltransferase that sequentially mono-, di-, and tri-methylates both 'Lys-4' (H3K4) and 'Lys-36' (H3K36) of histone H3 to produce respectively trimethylated 'Lys-4' (H3K4me3) and trimethylated 'Lys-36' (H3K36me3) histone H3 and plays a key role in meiotic prophase by determining hotspot localization thereby promoting meiotic recombination. Can also methylate all four core histones with H3 being the best substrate and the most highly modified. Is also able, on one hand, to mono and di-methylate H4K20 and on other hand to trimethylate H3K9 with the di-methylated H3K9 as the best substrate. During meiotic prophase, binds specific DNA sequences through its zinc finger domains thereby determining hotspot localization where it promotes local H3K4me3 and H3K36me3 enrichment on the same nucleosomes through its histone methyltransferase activity. Thereby promotes double-stranded breaks (DSB) formation, at this subset of PRDM9-binding sites, that initiates meiotic recombination for the proper meiotic progression. During meiotic progression hotspot-bound PRDM9 interacts with several complexes; in early leptonema binds CDYL and EHMT2 followed by EWSR1 and CXXC1 by the end of leptonema. EWSR1 joins PRDM9 with the chromosomal axis through REC8. In this way, controls the DSB repair pathway, pairing of homologous chromosomes and sex body formation. Moreover plays a central role in the transcriptional activation of genes during early meiotic prophase thanks to H3K4me3 and H3K36me3 enrichment that represents a specific tag for epigenetic transcriptional activation. In addition performs automethylation. Acetylation and phosphorylation of histone H3 attenuate or prevent histone H3 methylation. This is Histone-lysine N-methyltransferase PRDM9 from Rattus norvegicus (Rat).